A 261-amino-acid chain; its full sequence is Probable cyclic nucleotide phosphodiesterase PSM_A2567 (261 aa).

7 residues coordinate Fe cation: D22, H24, D62, N94, H160, H198, and H200. Residues H24, D62, and 94 to 95 contribute to the AMP site; that span reads NH. H200 contacts AMP.

Belongs to the cyclic nucleotide phosphodiesterase class-III family. Fe(2+) is required as a cofactor.

The chain is Probable cyclic nucleotide phosphodiesterase PSM_A2567 from Pseudoalteromonas sp. (strain SM9913).